Consider the following 235-residue polypeptide: Large ribosomal subunit protein uL1 (235 aa).

Belongs to the universal ribosomal protein uL1 family. Part of the 50S ribosomal subunit.

Its function is as follows. Binds directly to 23S rRNA. The L1 stalk is quite mobile in the ribosome, and is involved in E site tRNA release. Protein L1 is also a translational repressor protein, it controls the translation of the L11 operon by binding to its mRNA. This chain is Large ribosomal subunit protein uL1, found in Rhodospirillum centenum (strain ATCC 51521 / SW).